A 230-amino-acid chain; its full sequence is ATP-dependent dethiobiotin synthetase BioD (230 aa).

12-17 (DVGKTV) contributes to the ATP binding site. Thr16 serves as a coordination point for Mg(2+). Lys37 is an active-site residue. Thr41 lines the substrate pocket. Residues Asp49, 108-111 (EGAG), 168-169 (GS), and 198-200 (PEG) contribute to the ATP site. Positions 49 and 108 each coordinate Mg(2+).

This sequence belongs to the dethiobiotin synthetase family. As to quaternary structure, homodimer. Mg(2+) is required as a cofactor.

The protein resides in the cytoplasm. It carries out the reaction (7R,8S)-7,8-diammoniononanoate + CO2 + ATP = (4R,5S)-dethiobiotin + ADP + phosphate + 3 H(+). It participates in cofactor biosynthesis; biotin biosynthesis; biotin from 7,8-diaminononanoate: step 1/2. Catalyzes a mechanistically unusual reaction, the ATP-dependent insertion of CO2 between the N7 and N8 nitrogen atoms of 7,8-diaminopelargonic acid (DAPA, also called 7,8-diammoniononanoate) to form a ureido ring. The sequence is that of ATP-dependent dethiobiotin synthetase BioD from Corynebacterium kroppenstedtii (strain DSM 44385 / JCM 11950 / CIP 105744 / CCUG 35717).